The chain runs to 85 residues: Putative membrane protein insertion efficiency factor (85 aa).

This sequence belongs to the UPF0161 family.

The protein localises to the cell inner membrane. Functionally, could be involved in insertion of integral membrane proteins into the membrane. The protein is Putative membrane protein insertion efficiency factor of Shewanella woodyi (strain ATCC 51908 / MS32).